The chain runs to 868 residues: mRNA-capping enzyme (868 aa).

Lys282 (N6-GMP-lysine intermediate) is an active-site residue. The region spanning 594 to 868 (GIYRAQTALI…LFGFICLRKN (275 aa)) is the mRNA cap 0 methyltransferase domain. S-adenosyl-L-methionine-binding positions include Lys607, Gly624, Asp646, and 710 to 712 (LFI).

In the N-terminal section; belongs to the dsDNA virus mRNA guanylyltransferase family. It in the C-terminal section; belongs to the class I-like SAM-binding methyltransferase superfamily. mRNA cap 0 methyltransferase family. As to quaternary structure, part of the viral DNA-directed RNA polymerase that consists of 8 polII-like subunits (RPB1, RPB2, RPB3, RPB5, RPB6, RPB7, RPB9, RPB10), a capping enzyme and a termination factor.

The protein localises to the virion. The catalysed reaction is a 5'-end triphospho-ribonucleoside in mRNA + H2O = a 5'-end diphospho-ribonucleoside in mRNA + phosphate + H(+). It carries out the reaction a 5'-end diphospho-ribonucleoside in mRNA + GTP + H(+) = a 5'-end (5'-triphosphoguanosine)-ribonucleoside in mRNA + diphosphate. The enzyme catalyses a 5'-end (5'-triphosphoguanosine)-ribonucleoside in mRNA + S-adenosyl-L-methionine = a 5'-end (N(7)-methyl 5'-triphosphoguanosine)-ribonucleoside in mRNA + S-adenosyl-L-homocysteine. The protein operates within mRNA processing; mRNA capping. Probably catalyzes the second reaction in the mRNA cap formation pathway. Forms a covalent complex with GTP. The protein is mRNA-capping enzyme of Ornithodoros (relapsing fever ticks).